We begin with the raw amino-acid sequence, 582 residues long: Proline--tRNA ligase (582 aa).

Belongs to the class-II aminoacyl-tRNA synthetase family. ProS type 1 subfamily. In terms of assembly, homodimer.

It is found in the cytoplasm. It carries out the reaction tRNA(Pro) + L-proline + ATP = L-prolyl-tRNA(Pro) + AMP + diphosphate. Functionally, catalyzes the attachment of proline to tRNA(Pro) in a two-step reaction: proline is first activated by ATP to form Pro-AMP and then transferred to the acceptor end of tRNA(Pro). As ProRS can inadvertently accommodate and process non-cognate amino acids such as alanine and cysteine, to avoid such errors it has two additional distinct editing activities against alanine. One activity is designated as 'pretransfer' editing and involves the tRNA(Pro)-independent hydrolysis of activated Ala-AMP. The other activity is designated 'posttransfer' editing and involves deacylation of mischarged Ala-tRNA(Pro). The misacylated Cys-tRNA(Pro) is not edited by ProRS. The sequence is that of Proline--tRNA ligase from Mycobacterium tuberculosis (strain CDC 1551 / Oshkosh).